Here is a 397-residue protein sequence, read N- to C-terminus: Cephalotocin receptor 1 (397 aa).

At 1–48 the chain is on the extracellular side; the sequence is MRYITTHPNEISTQIWNNFSSTEIWSNFSAAKNETQPIRRNQDLANAE. Residues N18, N27, and N33 are each glycosylated (N-linked (GlcNAc...) asparagine). A helical membrane pass occupies residues 49–69; it reads VITLAVVIIITVIGNSIVLIT. The Cytoplasmic portion of the chain corresponds to 70–91; it reads LFQRRKKLTRMHLFILHLSVTD. A helical membrane pass occupies residues 92-112; it reads LFVAFFNNLPQMIWDITFLFL. The Extracellular segment spans residues 113 to 120; that stretch reads GTDLLCRL. C118 and C194 are disulfide-bonded. Residues 121-141 traverse the membrane as a helical segment; the sequence is VTYLQSVAMYASSYVLVATAI. Residues 142–162 lie on the Cytoplasmic side of the membrane; that stretch reads DRYFAICHPLSSHKWTTARVH. A helical transmembrane segment spans residues 163–183; sequence VMVFIAWMLSFLFSTPQLFIW. Residues 184 to 205 lie on the Extracellular side of the membrane; it reads SMQFSNIGLTCQATFDPEWTLK. The chain crosses the membrane as a helical span at residues 206 to 226; it reads FYITWLTVAIWILPTIALTLF. The Cytoplasmic portion of the chain corresponds to 227–293; the sequence is YGMMCFAVWK…RGISRAKVRS (67 aa). A helical membrane pass occupies residues 294–314; that stretch reads VALTLSVVACCFICWSPFFVC. Over 315–331 the chain is Extracellular; the sequence is QMWAAWDENAPYSGAIY. Residues 332-352 traverse the membrane as a helical segment; that stretch reads TILLLLSSLNSCTNPWIYMIF. The Cytoplasmic segment spans residues 353–397; the sequence is SVFQHRAKTSRFVNDEETTSVTVLSSRNDIRLMSMKKKLEQTARN.

The protein belongs to the G-protein coupled receptor 1 family. Vasopressin/oxytocin receptor subfamily. In terms of tissue distribution, present in brain, buccal ganglion, gastric ganglion, olfactory lube, peduncle lobe, optical lobe, pancreas, the oviduct and the ovary.

It localises to the cell membrane. Its function is as follows. Acts as a receptor for cephalotocin. The protein is Cephalotocin receptor 1 of Octopus vulgaris (Common octopus).